A 132-amino-acid polypeptide reads, in one-letter code: Small ribosomal subunit protein eS24 (132 aa).

Residues 90 to 100 are compositionally biased toward basic and acidic residues; the sequence is RLAKHGLYEKK. Positions 90–132 are disordered; sequence RLAKHGLYEKKKTSRKQRKERKNRMKKVRGTAKANVGAGKKKD. Basic residues predominate over residues 101 to 119; it reads KTSRKQRKERKNRMKKVRG.

This sequence belongs to the eukaryotic ribosomal protein eS24 family. As to quaternary structure, component of the small ribosomal subunit. Part of the small subunit (SSU) processome, composed of more than 70 proteins and the RNA chaperone small nucleolar RNA (snoRNA) U3.

It is found in the cytoplasm. The protein localises to the nucleus. Its subcellular location is the nucleolus. Functionally, component of the small ribosomal subunit. The ribosome is a large ribonucleoprotein complex responsible for the synthesis of proteins in the cell. Required for processing of pre-rRNA and maturation of 40S ribosomal subunits. Part of the small subunit (SSU) processome, first precursor of the small eukaryotic ribosomal subunit. During the assembly of the SSU processome in the nucleolus, many ribosome biogenesis factors, an RNA chaperone and ribosomal proteins associate with the nascent pre-rRNA and work in concert to generate RNA folding, modifications, rearrangements and cleavage as well as targeted degradation of pre-ribosomal RNA by the RNA exosome. The sequence is that of Small ribosomal subunit protein eS24 (rps24) from Xenopus laevis (African clawed frog).